Reading from the N-terminus, the 500-residue chain is MDALSLVNSTVAKFNEVTQLQASPAILSTALTAIAGIIVLLVITSKRRSSLKLPPGKLGLPFIGETLEFVKALRSDTLRQFVEEREGKFGRVFKTSLLGKPTVILCGPAGNRLVLSNEEKLLHVSWSAQIARILGLNSVAVKRGDDHRVLRVALAGFLGSAGLQLYIGKMSALIRNHINEKWKGKDEVNVLSLVRDLVMDNSAILFFNIYDKERKQQLHEILKIILASHFGIPLNIPGFLYRKALKGSLKRKKILSALLEKRKDELRSRLASSNQDLLSVLLSFRDERGKPLSDEAVLDNCFAMLDASYDTTTSQMTLILKMLSSNPECFEKVVQEQLEIASNKKEGEEITMKDIKAMKYTWQVLQESLRMLSPVFGTLRKTMNDINHDGYTIPKGWQVVWTTYSTHQKDIYFKQPDKFMPSRFEEEDGHLDAYTFVPFGGGRRTCPGWEYAKVEILLFLHHFVKAFSGYTPTDPHERICGYPVPLVPVKGFPIKLIARS.

The helical transmembrane segment at 24–44 (PAILSTALTAIAGIIVLLVIT) threads the bilayer. Cys446 is a heme binding site.

Belongs to the cytochrome P450 family.

Its subcellular location is the microsome membrane. The catalysed reaction is taxusin + reduced [NADPH--hemoprotein reductase] + O2 = 7beta-hydroxytaxusin + oxidized [NADPH--hemoprotein reductase] + H2O + H(+). The enzyme catalyses 2alpha-hydroxytaxusin + reduced [NADPH--hemoprotein reductase] + O2 = 2alpha,7beta-dihydroxytaxusin + oxidized [NADPH--hemoprotein reductase] + H2O + H(+). It carries out the reaction 7beta-hydroxytaxusin + reduced [NADPH--hemoprotein reductase] + O2 = 2alpha,7beta-dihydroxytaxusin + oxidized [NADPH--hemoprotein reductase] + H2O + H(+). The protein operates within alkaloid biosynthesis; taxol biosynthesis. Functionally, catalyzes the conversion of taxusin to 7-beta-hydroxytaxusin in taxol biosynthesis. Catalyzes the conversion of 2-alpha-hydroxytaxusin to 2-alpha-7-beta-hydroxytaxusin in taxol biosynthesis. This Taxus cuspidata (Japanese yew) protein is Taxoid 7-beta-hydroxylase.